Consider the following 43-residue polypeptide: Seed non-specific lipid transfer protein-like (43 aa).

The protein belongs to the plant LTP family. In terms of assembly, homodimer.

Its function is as follows. Plant non-specific lipid-transfer proteins transfer phospholipids as well as galactolipids across membranes. May play a role in wax or cutin deposition in the cell walls of expanding epidermal cells and certain secretory tissues. This isoform inhibits the hyphal growth of several fungi in vitro. This Raphanus sativus (Radish) protein is Seed non-specific lipid transfer protein-like.